The following is a 402-amino-acid chain: Acetylornithine aminotransferase (402 aa).

Pyridoxal 5'-phosphate is bound by residues 106–107 and Phe132; that span reads GA. N(2)-acetyl-L-ornithine is bound at residue Arg135. Position 217-220 (217-220) interacts with pyridoxal 5'-phosphate; that stretch reads DEVQ. Position 247 is an N6-(pyridoxal phosphate)lysine (Lys247). Thr275 lines the N(2)-acetyl-L-ornithine pocket. Thr276 is a pyridoxal 5'-phosphate binding site.

It belongs to the class-III pyridoxal-phosphate-dependent aminotransferase family. ArgD subfamily. In terms of assembly, homodimer. Pyridoxal 5'-phosphate is required as a cofactor.

The protein localises to the cytoplasm. The catalysed reaction is N(2)-acetyl-L-ornithine + 2-oxoglutarate = N-acetyl-L-glutamate 5-semialdehyde + L-glutamate. It participates in amino-acid biosynthesis; L-arginine biosynthesis; N(2)-acetyl-L-ornithine from L-glutamate: step 4/4. In Streptomyces coelicolor (strain ATCC BAA-471 / A3(2) / M145), this protein is Acetylornithine aminotransferase.